The following is a 171-amino-acid chain: Probable chemoreceptor glutamine deamidase CheD 1 (171 aa).

Residues 1–18 (MTRTTGAAPDRAAPAAGE) are compositionally biased toward low complexity. Positions 1-23 (MTRTTGAAPDRAAPAAGETPGGG) are disordered.

Belongs to the CheD family.

It carries out the reaction L-glutaminyl-[protein] + H2O = L-glutamyl-[protein] + NH4(+). Probably deamidates glutamine residues to glutamate on methyl-accepting chemotaxis receptors (MCPs), playing an important role in chemotaxis. The protein is Probable chemoreceptor glutamine deamidase CheD 1 of Anaeromyxobacter dehalogenans (strain 2CP-C).